The primary structure comprises 1482 residues: Lysine-specific demethylase rbr-2 (1482 aa).

A disordered region spans residues 1 to 45; that stretch reads MRGRRQEDIATTSSAPSTSTSHKKKTVSSNGSFRPRTQSNPGGKM. The segment covering 11 to 20 has biased composition (low complexity); it reads TTSSAPSTST. Residues 30–41 are compositionally biased toward polar residues; the sequence is NGSFRPRTQSNP. Residues 61 to 102 form the JmjN domain; the sequence is APVYYPTSEEFADPIEYVAKIRPDAERYGVVKIVPPSDFKPP. The 98-residue stretch at 126–223 folds into the ARID domain; that stretch reads VKEKHTFIER…HIEPFNRNLK (98 aa). The interval 244–316 is disordered; the sequence is YQHHHGTMRS…SKTEEDEEEN (73 aa). A compositionally biased stretch (basic and acidic residues) spans 251-264; it reads MRSEPENTDGKNTE. Basic residues predominate over residues 277 to 288; that stretch reads GRRRSKNKKPVP. The PHD-type 1 zinc finger occupies 322–374; that stretch reads QVYCVSCNEGKDEDLLLLCDIEGCNSGRHTYCCDPVLDEVPEGEWRCPKCIES. One can recognise a JmjC domain in the interval 471-637; the sequence is QYANHAWNLN…KGRECVQSYS (167 aa). Residues histidine 517, aspartate 520, and histidine 605 each contribute to the Fe cation site. A PHD-type 2 zinc finger spans residues 1206-1260; the sequence is LEGCCCLGGNKSDSSESVLSCIMCESQFHVRCCEWSTFFQHLPKGCFMCVRCLRG. A disordered region spans residues 1361 to 1403; the sequence is QQRPVKSKPSASLFDPKLNSKRKRPNPSQKDSSKSKSRKRQGQ. Residues 1416 to 1471 form a PHD-type 3 zinc finger; sequence FKSCQARSCLKPFGDSVNWVMCDAGCKNWFHVICVGFTLREINDMHEYRCSSCLDH.

The protein belongs to the JARID1 histone demethylase family. The cofactor is Fe(2+).

Its subcellular location is the nucleus. The enzyme catalyses N(6),N(6),N(6)-trimethyl-L-lysyl(4)-[histone H3] + 3 2-oxoglutarate + 3 O2 = L-lysyl(4)-[histone H3] + 3 formaldehyde + 3 succinate + 3 CO2. In terms of biological role, histone demethylase that specifically demethylates 'Lys-4' of histone H3, thereby playing a central role in histone code. Does not demethylate histone H3 'Lys-9', H3 'Lys-27', H3 'Lys-36', H3 'Lys-79' or H4 'Lys-20'. Demethylates trimethylated and dimethylated but not monomethylated H3 'Lys-4'. Involved in larval development and vulva formation. In Caenorhabditis briggsae, this protein is Lysine-specific demethylase rbr-2 (rbr-2).